The sequence spans 351 residues: Fe-S cluster assembly protein DRE2 (351 aa).

The interval 1–151 (MATTGRVLLL…KPDIGAQQAI (151 aa)) is N-terminal SAM-like domain. 2 disordered regions span residues 93–118 (RNRE…RYND) and 157–186 (RRRK…PSSN). Composition is skewed to polar residues over residues 105–114 (GNGSNANSSR) and 167–186 (TLAS…PSSN). Positions 152–243 (PLKLSRRRKE…EDELLDEDDM (92 aa)) are linker. The [2Fe-2S] cluster site is built by Cys253, Cys264, Cys267, and Cys269. The fe-S binding site A stretch occupies residues 253–269 (CRPKPGKRRRACKDCSC). [4Fe-4S] cluster contacts are provided by Cys314, Cys317, Cys325, and Cys328. 2 consecutive short sequence motifs (cx2C motif) follow at residues 314–317 (CGNC) and 325–328 (CDGC). The interval 314-328 (CGNCSLGDAFRCDGC) is fe-S binding site B.

This sequence belongs to the anamorsin family. In terms of assembly, monomer. Interacts with TAH18. Interacts with MIA40. [2Fe-2S] cluster is required as a cofactor. Requires [4Fe-4S] cluster as cofactor.

The protein resides in the cytoplasm. The protein localises to the mitochondrion intermembrane space. Functionally, component of the cytosolic iron-sulfur (Fe-S) protein assembly (CIA) machinery required for the maturation of extramitochondrial Fe-S proteins. Part of an electron transfer chain functioning in an early step of cytosolic Fe-S biogenesis, facilitating the de novo assembly of a [4Fe-4S] cluster on the scaffold complex CFD1-NBP35. Electrons are transferred to DRE2 from NADPH via the FAD- and FMN-containing protein TAH18. TAH18-DRE2 are also required for the assembly of the diferric tyrosyl radical cofactor of ribonucleotide reductase (RNR), probably by providing electrons for reduction during radical cofactor maturation in the catalytic small subunit RNR2. This chain is Fe-S cluster assembly protein DRE2, found in Ajellomyces capsulatus (strain NAm1 / WU24) (Darling's disease fungus).